The chain runs to 699 residues: MATAREIPLNRTRNIGIMAHIDAGKTTTTERVLYYTGVSHKMGEVHEGSAVMDWMEQEQERGITITSAATTCYWLGMDQQYPKHRINIIDTPGHVDFTIEVERSLRVLDGAVAVFCSVGGVEPQSETVWRQANRYHVPRLGFVNKMDRAGANFLRVVNQVKDRLNANPIPIQLPIGAEEDFKGVIDLIRKKAIYWNEADRGRTYELADIPEDMKAEVQKWREKMIEAAAESSEELMDRYLEAGDLSPEQIRQGLRQRTLANEIVPILCGSAFKNKGVQALLDAVIDYLPSPTDVPAIRGEEDDGSEGSRSASDDEPFAALAFKIASDPFVGTLTFFRVYSGILKSGDSVYNPIKGKKERIGRLLQMHSNSREEIKEVRAGDIAAAVGLKTVTTGDTICNQQNIITLEKMDFPEPVISVAIEPKTKADQEKMGVALGKLAQEDPSFRVHTDEESAQTIIEGMGELHLEIIVDRMRREFNVEANVGKPRVAYRETIRRSVEQQGKYIRQTGGRGQYGDVWLRIEPREPGAGFEFENAIVGGVVPREYIPAVEKGVREQMENGIRAGYPVVDVKVTIFEGSYHDVDSSEMAFKIAGSMAFKEGASKADPVLLEPIMKVEVVTPEEYMGDVVGDLNRRRGMIQGMDESPAGKIVDVEVPLAEMFGYATDLRSLSQGRATYTMEFLKYAEAPSNIAEAIIKQQS.

Residues 10 to 292 (NRTRNIGIMA…AVIDYLPSPT (283 aa)) enclose the tr-type G domain. GTP-binding positions include 19–26 (AHIDAGKT), 90–94 (DTPGH), and 144–147 (NKMD). The interval 292-312 (TDVPAIRGEEDDGSEGSRSAS) is disordered.

Belongs to the TRAFAC class translation factor GTPase superfamily. Classic translation factor GTPase family. EF-G/EF-2 subfamily.

The protein resides in the cytoplasm. In terms of biological role, catalyzes the GTP-dependent ribosomal translocation step during translation elongation. During this step, the ribosome changes from the pre-translocational (PRE) to the post-translocational (POST) state as the newly formed A-site-bound peptidyl-tRNA and P-site-bound deacylated tRNA move to the P and E sites, respectively. Catalyzes the coordinated movement of the two tRNA molecules, the mRNA and conformational changes in the ribosome. The sequence is that of Elongation factor G from Coxiella burnetii (strain CbuG_Q212) (Coxiella burnetii (strain Q212)).